Consider the following 479-residue polypeptide: 3-isopropylmalate dehydratase large subunit (479 aa).

[4Fe-4S] cluster is bound by residues Cys350, Cys415, and Cys418.

This sequence belongs to the aconitase/IPM isomerase family. LeuC type 1 subfamily. Heterodimer of LeuC and LeuD. It depends on [4Fe-4S] cluster as a cofactor.

It catalyses the reaction (2R,3S)-3-isopropylmalate = (2S)-2-isopropylmalate. The protein operates within amino-acid biosynthesis; L-leucine biosynthesis; L-leucine from 3-methyl-2-oxobutanoate: step 2/4. Its function is as follows. Catalyzes the isomerization between 2-isopropylmalate and 3-isopropylmalate, via the formation of 2-isopropylmaleate. This is 3-isopropylmalate dehydratase large subunit from Caulobacter vibrioides (strain ATCC 19089 / CIP 103742 / CB 15) (Caulobacter crescentus).